A 438-amino-acid polypeptide reads, in one-letter code: Rhomboid-related protein 1 (438 aa).

A disordered region spans residues 1–62; sequence MGRVEDGGTT…PSQPGPALWS (62 aa). Residues 8 to 17 show a composition bias toward acidic residues; sequence GTTEELEDWD. 7 helical membrane-spanning segments follow: residues 196-216, 262-282, 284-304, 308-328, 340-359, 372-392, and 405-425; these read PPVF…CYGA, GFNA…HGLL, ISLL…ITDM, VVGG…NVVM, LRMV…AVWL, PSFM…LTIL, and WWVV…WNVF. S312 (nucleophile) is an active-site residue. Residue H377 is part of the active site.

This sequence belongs to the peptidase S54 family. As to expression, detected in heart, brain, skeletal muscle and kidney.

It is found in the membrane. It carries out the reaction Cleaves type-1 transmembrane domains using a catalytic dyad composed of serine and histidine that are contributed by different transmembrane domains.. Functionally, may be involved in regulated intramembrane proteolysis and the subsequent release of functional polypeptides from their membrane anchors. This is Rhomboid-related protein 1 (RHBDL1) from Homo sapiens (Human).